We begin with the raw amino-acid sequence, 453 residues long: UDP-glycosyltransferase 79B3 (453 aa).

UDP-alpha-D-glucose is bound by residues serine 266, 325-327 (VQQ), 342-350 (HCGFGSMWE), and 364-367 (LGDQ).

The protein belongs to the UDP-glycosyltransferase family.

The polypeptide is UDP-glycosyltransferase 79B3 (UGT79B3) (Arabidopsis thaliana (Mouse-ear cress)).